The following is a 326-amino-acid chain: Tetraacyldisaccharide 4'-kinase (326 aa).

Residue 55–62 participates in ATP binding; the sequence is TVGGNGKT.

This sequence belongs to the LpxK family.

The catalysed reaction is a lipid A disaccharide + ATP = a lipid IVA + ADP + H(+). The protein operates within glycolipid biosynthesis; lipid IV(A) biosynthesis; lipid IV(A) from (3R)-3-hydroxytetradecanoyl-[acyl-carrier-protein] and UDP-N-acetyl-alpha-D-glucosamine: step 6/6. Transfers the gamma-phosphate of ATP to the 4'-position of a tetraacyldisaccharide 1-phosphate intermediate (termed DS-1-P) to form tetraacyldisaccharide 1,4'-bis-phosphate (lipid IVA). The sequence is that of Tetraacyldisaccharide 4'-kinase from Tolumonas auensis (strain DSM 9187 / NBRC 110442 / TA 4).